The following is a 273-amino-acid chain: MPLHRREAAPAKLNLTLHVTGRRVDGYHLLDSLVVFLDLGDVVTIAPGPLSLSLTGPFAPGLAAEPDNLCLRAARLAGREARITLEKNLPVASGIGGGSADAAAVLRALDASPRRPEALGADVPVCLASRPVRMRGVGEILAPLPALPELNVLLVNPGRGLSTPAVFKALARHDNPPMPEPLPDFPDAQALIGFLHECRNDLEAPAIALMPGIADCLAALRSAGAQLARMSGSGATCFGLFASAAEAQAARARIAGTNPGWWVAASGLAPAKH.

Lys-12 is a catalytic residue. 90–100 (PVASGIGGGSA) provides a ligand contact to ATP. Asp-122 is a catalytic residue.

Belongs to the GHMP kinase family. IspE subfamily.

It carries out the reaction 4-CDP-2-C-methyl-D-erythritol + ATP = 4-CDP-2-C-methyl-D-erythritol 2-phosphate + ADP + H(+). It participates in isoprenoid biosynthesis; isopentenyl diphosphate biosynthesis via DXP pathway; isopentenyl diphosphate from 1-deoxy-D-xylulose 5-phosphate: step 3/6. Catalyzes the phosphorylation of the position 2 hydroxy group of 4-diphosphocytidyl-2C-methyl-D-erythritol. The protein is 4-diphosphocytidyl-2-C-methyl-D-erythritol kinase of Paracoccus denitrificans (strain Pd 1222).